The following is a 699-amino-acid chain: Protein Scribble homolog let-413 (699 aa).

LRR repeat units follow at residues Lys-37 to Arg-59, His-60 to Leu-81, Gln-83 to Cys-104, Leu-106 to Cys-127, Ser-129 to Leu-150, Asn-152 to Arg-174, Lys-175 to Leu-196, Ser-198 to Cys-219, Met-221 to Met-242, Asn-244 to Leu-265, Arg-267 to Cys-288, Ser-290 to Leu-311, Gln-313 to Cys-334, Ser-336 to Cys-357, Asn-359 to Leu-380, and Lys-382 to Arg-403. Residues Ala-584–Ser-665 enclose the PDZ domain. Residues Arg-656–Ser-699 are disordered. 2 stretches are compositionally biased toward polar residues: residues Ser-659–Leu-676 and Pro-684–Ser-699.

This sequence belongs to the LAP (LRR and PDZ) protein family. In terms of tissue distribution, expressed in the terminal web of the intestine. Expressed in seam cells. Expressed in the basolateral surfaces of epithelia and the nervous system. Expressed in the intestine, epidermis, excretory canal, reproductive system including vulva, uterus and spermatheca, in both larval and adult stage animals.

The protein localises to the basolateral cell membrane. Its function is as follows. Critical role in assembling adherens junctions; adapter protein involved in polarizing protein trafficking in epithelial cells. Necessary to maintain, not establish, the entire terminal web (organelle-depleted, intermediate filament-rich layer of cytoplasm that underlies the apical microvilli of polarized epithelial cells) or brush border assembly at the apical surface gut cells. Required for correct localization of ifb-2 intermediate filaments in the terminal web. Required for dlg-1 and hmr-1 lateral localization. Maintains cell polarity by correctly positioning adherens junction protein components including ajm-1 and hmp-1 at discrete subapical positions. Plays a role in the correct localization of the dlg-1-ajm-1 complex, polarity protein par-3, and actin microfilament to the apical junction of spermatheca cells, and is required for ovulation. Regulates the establishment of newly-formed epithelia in conjunction with dlg-1. Required in the epidermis during larval development. Plays a role in cellular junction integrity and in the directed outgrowth of seam cells, towards neighboring seam cells, during larval development; probably acts by promoting the assembly and stability of dlg-1 at apical junctions. The protein is Protein Scribble homolog let-413 of Caenorhabditis elegans.